We begin with the raw amino-acid sequence, 246 residues long: UDP-2,3-diacylglucosamine hydrolase (246 aa).

Positions 8, 10, 41, 79, and 114 each coordinate Mn(2+). 79-80 contacts substrate; sequence NR. Substrate is bound by residues aspartate 122, serine 160, asparagine 164, lysine 167, and histidine 195. Mn(2+) is bound by residues histidine 195 and histidine 197.

The protein belongs to the LpxH family. It depends on Mn(2+) as a cofactor.

It is found in the cell inner membrane. The enzyme catalyses UDP-2-N,3-O-bis[(3R)-3-hydroxytetradecanoyl]-alpha-D-glucosamine + H2O = 2-N,3-O-bis[(3R)-3-hydroxytetradecanoyl]-alpha-D-glucosaminyl 1-phosphate + UMP + 2 H(+). The protein operates within glycolipid biosynthesis; lipid IV(A) biosynthesis; lipid IV(A) from (3R)-3-hydroxytetradecanoyl-[acyl-carrier-protein] and UDP-N-acetyl-alpha-D-glucosamine: step 4/6. Its function is as follows. Hydrolyzes the pyrophosphate bond of UDP-2,3-diacylglucosamine to yield 2,3-diacylglucosamine 1-phosphate (lipid X) and UMP by catalyzing the attack of water at the alpha-P atom. Involved in the biosynthesis of lipid A, a phosphorylated glycolipid that anchors the lipopolysaccharide to the outer membrane of the cell. The chain is UDP-2,3-diacylglucosamine hydrolase from Chromohalobacter salexigens (strain ATCC BAA-138 / DSM 3043 / CIP 106854 / NCIMB 13768 / 1H11).